Reading from the N-terminus, the 174-residue chain is Adenylate kinase (174 aa).

The interval 12-41 (STGDMLRAAIKAGTPLGLEAKKIIDEGGLV) is NMP. AMP is bound by residues Thr-13, Arg-18, 39 to 41 (GLV), 67 to 70 (GFPR), and Gln-74. An LID region spans residues 104 to 141 (GRRVHLASGRTYHVTYNPPKVEGKDDVTGEDLIQRDDD). ATP-binding positions include Arg-105 and 114–115 (TY). 2 residues coordinate AMP: Arg-138 and Arg-149.

This sequence belongs to the adenylate kinase family. Monomer.

It localises to the cytoplasm. The enzyme catalyses AMP + ATP = 2 ADP. Its pathway is purine metabolism; AMP biosynthesis via salvage pathway; AMP from ADP: step 1/1. Functionally, catalyzes the reversible transfer of the terminal phosphate group between ATP and AMP. Plays an important role in cellular energy homeostasis and in adenine nucleotide metabolism. In Neisseria flavescens, this protein is Adenylate kinase.